Consider the following 547-residue polypeptide: CTP synthase (547 aa).

Positions 1–265 (MARYVFITGG…DQAVLDAFGI (265 aa)) are amidoligase domain. Ser-13 provides a ligand contact to CTP. Residue Ser-13 coordinates UTP. Residues 14–19 (SLGKGL) and Asp-71 each bind ATP. Positions 71 and 139 each coordinate Mg(2+). CTP is bound by residues 146-148 (DIE), 186-191 (KTKPTQ), and Lys-222. UTP is bound by residues 186 to 191 (KTKPTQ) and Lys-222. The 256-residue stretch at 291-546 (RVAIVGKYTQ…VRAAVEVSRL (256 aa)) folds into the Glutamine amidotransferase type-1 domain. Gly-353 is an L-glutamine binding site. Cys-380 (nucleophile; for glutamine hydrolysis) is an active-site residue. L-glutamine is bound by residues 381–384 (LGMQ), Glu-404, and Arg-474. Active-site residues include His-519 and Glu-521.

It belongs to the CTP synthase family. Homotetramer.

It catalyses the reaction UTP + L-glutamine + ATP + H2O = CTP + L-glutamate + ADP + phosphate + 2 H(+). It carries out the reaction L-glutamine + H2O = L-glutamate + NH4(+). The enzyme catalyses UTP + NH4(+) + ATP = CTP + ADP + phosphate + 2 H(+). The protein operates within pyrimidine metabolism; CTP biosynthesis via de novo pathway; CTP from UDP: step 2/2. Its activity is regulated as follows. Allosterically activated by GTP, when glutamine is the substrate; GTP has no effect on the reaction when ammonia is the substrate. The allosteric effector GTP functions by stabilizing the protein conformation that binds the tetrahedral intermediate(s) formed during glutamine hydrolysis. Inhibited by the product CTP, via allosteric rather than competitive inhibition. Catalyzes the ATP-dependent amination of UTP to CTP with either L-glutamine or ammonia as the source of nitrogen. Regulates intracellular CTP levels through interactions with the four ribonucleotide triphosphates. This Cereibacter sphaeroides (strain ATCC 17029 / ATH 2.4.9) (Rhodobacter sphaeroides) protein is CTP synthase.